A 213-amino-acid polypeptide reads, in one-letter code: Orotate phosphoribosyltransferase (213 aa).

Residue Lys-26 participates in 5-phospho-alpha-D-ribose 1-diphosphate binding. 34–35 is a binding site for orotate; it reads FF. 5-phospho-alpha-D-ribose 1-diphosphate contacts are provided by residues 72–73, Arg-99, Lys-100, Lys-103, His-105, and 124–132; these read YK and DDVITAGTA. Residues Thr-128 and Arg-156 each contribute to the orotate site.

The protein belongs to the purine/pyrimidine phosphoribosyltransferase family. PyrE subfamily. Homodimer. Requires Mg(2+) as cofactor.

It carries out the reaction orotidine 5'-phosphate + diphosphate = orotate + 5-phospho-alpha-D-ribose 1-diphosphate. Its pathway is pyrimidine metabolism; UMP biosynthesis via de novo pathway; UMP from orotate: step 1/2. Its function is as follows. Catalyzes the transfer of a ribosyl phosphate group from 5-phosphoribose 1-diphosphate to orotate, leading to the formation of orotidine monophosphate (OMP). The chain is Orotate phosphoribosyltransferase from Salmonella agona (strain SL483).